The sequence spans 264 residues: Sirohydrochlorin cobaltochelatase (264 aa).

The Co-sirohydrochlorin site is built by Gly45, Ile84, Ile85, Asp88, Glu89, and Lys92. The active-site Proton acceptor is the His145. Residues His145 and Glu175 each contribute to the Co(2+) site. Residues Leu202, Val203, and His207 each contribute to the Co-sirohydrochlorin site. His207 is a Co(2+) binding site.

It belongs to the CbiK family. In terms of assembly, homotrimer.

It catalyses the reaction Co-sirohydrochlorin + 2 H(+) = sirohydrochlorin + Co(2+). It carries out the reaction Co-precorrin-2 + 3 H(+) = precorrin-2 + Co(2+). The protein operates within cofactor biosynthesis; adenosylcobalamin biosynthesis; cob(II)yrinate a,c-diamide from sirohydrochlorin (anaerobic route): step 1/10. Functionally, cobalt chelatase responsible for the insertion of cobalt during anaerobic cobalamin biosynthesis. Can catalyze the insertion of Co(2+) into either sirohydrochlorin or precorrin-2. It is not clear which is the natural substrate in Salmonella. In Salmonella typhimurium (strain LT2 / SGSC1412 / ATCC 700720), this protein is Sirohydrochlorin cobaltochelatase.